The primary structure comprises 344 residues: tRNA N6-adenosine threonylcarbamoyltransferase (344 aa).

Positions 113 and 117 each coordinate Fe cation. Substrate-binding positions include 135–139 (LVSGG), Asp169, Gly182, Asp186, and Asn278. Asp306 serves as a coordination point for Fe cation. Positions 325–344 (ESPISVGTDPSLSVETPQVF) are disordered. The segment covering 326–344 (SPISVGTDPSLSVETPQVF) has biased composition (polar residues).

This sequence belongs to the KAE1 / TsaD family. The cofactor is Fe(2+).

It localises to the cytoplasm. It carries out the reaction L-threonylcarbamoyladenylate + adenosine(37) in tRNA = N(6)-L-threonylcarbamoyladenosine(37) in tRNA + AMP + H(+). Functionally, required for the formation of a threonylcarbamoyl group on adenosine at position 37 (t(6)A37) in tRNAs that read codons beginning with adenine. Is involved in the transfer of the threonylcarbamoyl moiety of threonylcarbamoyl-AMP (TC-AMP) to the N6 group of A37, together with TsaE and TsaB. TsaD likely plays a direct catalytic role in this reaction. This Corynebacterium glutamicum (strain R) protein is tRNA N6-adenosine threonylcarbamoyltransferase.